Reading from the N-terminus, the 317-residue chain is Glutaminase (317 aa).

Positions 67, 118, 162, 169, 193, 245, and 263 each coordinate substrate.

It belongs to the glutaminase family. Homotetramer.

The catalysed reaction is L-glutamine + H2O = L-glutamate + NH4(+). The chain is Glutaminase from Brucella abortus (strain S19).